The chain runs to 513 residues: MPYLLEMKNITKTFGSVKAIDNVSLRLNAGEIVSLCGENGSGKSTLMKVLCGIYPHGSYEGEIIFAGEEIQASHIRDTERKGIAIIHQELALVKELTVLENIFLGNEITHNGIMDYDLMTLRCQKLLAQVSLSISPDTRVGDLGLGQQQLVEIAKALNKQVRLLILDEPTASLTEQETSVLLDIIRDLQQHGIACIYISHKLNEVKAISDTICVIRDGQHIGTRDAAGMSEDDIITMMVGRELTALYPNEPHTTGDEILRIEHLTAWHPVNRHIKRVNDVSFSLKRGEILGIAGLVGAGRTETIQCLFGVWPGQWEGKIYIDGKQVDIRNCQQAIAQGIAMVPEDRKRDGIVPVMAVGKNITLAALNKFTGGISQLDDAAEQKCILESIQQLKVKTSSPDLAIGRLSGGNQQKAILARCLLLNPRILILDEPTRGIDIGAKYEIYKLINQLVQQGIAVIVISSELPEVLGLSDRVLVMHEGKLKANLINHNLTQEQVMEAALRSEHHVEKQSV.

ABC transporter domains follow at residues 5-242 (LEMK…VGRE) and 259-505 (LRIE…LRSE). 37–44 (GENGSGKS) contributes to the ATP binding site.

It belongs to the ABC transporter superfamily. Xylose importer (TC 3.A.1.2.4) family. The complex is composed of two ATP-binding proteins (XylG), two transmembrane proteins (XylH) and a solute-binding protein (XylF).

It is found in the cell inner membrane. The catalysed reaction is D-xylose(out) + ATP + H2O = D-xylose(in) + ADP + phosphate + H(+). Part of the ABC transporter complex XylFGH involved in xylose import. Responsible for energy coupling to the transport system. The chain is Xylose import ATP-binding protein XylG from Shigella boydii serotype 4 (strain Sb227).